A 160-amino-acid polypeptide reads, in one-letter code: MSGGAGIPEVPGIDASGLRLGIVASTWHSRICDALLAGARKVAADSGIDGPTVVRVLGAIEIPVVVQELARHHDAVVALGVVIRGDTPHFDYVCNSVTQGLTRIALDTSTPVGNGVLTTNTEKQALDRAGLPTSAEDKGAQAAAAALTTALTLLNLRSRI.

Residues W27, A59–E61, and V81–I83 contribute to the 5-amino-6-(D-ribitylamino)uracil site. Residue D86–T87 participates in (2S)-2-hydroxy-3-oxobutyl phosphate binding. H89 (proton donor) is an active-site residue. N114 provides a ligand contact to 5-amino-6-(D-ribitylamino)uracil. (2S)-2-hydroxy-3-oxobutyl phosphate is bound at residue R128.

It belongs to the DMRL synthase family. Homopentamer.

The enzyme catalyses (2S)-2-hydroxy-3-oxobutyl phosphate + 5-amino-6-(D-ribitylamino)uracil = 6,7-dimethyl-8-(1-D-ribityl)lumazine + phosphate + 2 H2O + H(+). It participates in cofactor biosynthesis; riboflavin biosynthesis; riboflavin from 2-hydroxy-3-oxobutyl phosphate and 5-amino-6-(D-ribitylamino)uracil: step 1/2. Catalyzes the formation of 6,7-dimethyl-8-ribityllumazine by condensation of 5-amino-6-(D-ribitylamino)uracil with 3,4-dihydroxy-2-butanone 4-phosphate. This is the penultimate step in the biosynthesis of riboflavin. This Mycobacterium leprae (strain Br4923) protein is 6,7-dimethyl-8-ribityllumazine synthase.